Consider the following 383-residue polypeptide: 23S rRNA (uracil(747)-C(5))-methyltransferase RlmC (383 aa).

Residues Cys3, Cys11, Cys14, and Cys89 each coordinate [4Fe-4S] cluster. S-adenosyl-L-methionine-binding residues include Gln214, Phe243, Glu270, and Asn315. The active-site Nucleophile is Cys342.

This sequence belongs to the class I-like SAM-binding methyltransferase superfamily. RNA M5U methyltransferase family. RlmC subfamily.

It carries out the reaction uridine(747) in 23S rRNA + S-adenosyl-L-methionine = 5-methyluridine(747) in 23S rRNA + S-adenosyl-L-homocysteine + H(+). Catalyzes the formation of 5-methyl-uridine at position 747 (m5U747) in 23S rRNA. This is 23S rRNA (uracil(747)-C(5))-methyltransferase RlmC from Actinobacillus succinogenes (strain ATCC 55618 / DSM 22257 / CCUG 43843 / 130Z).